Consider the following 125-residue polypeptide: Small ribosomal subunit protein eS8 (125 aa).

Positions 1–20 are disordered; sequence MIWQGRSRRKPSGGFYRKAR.

Belongs to the eukaryotic ribosomal protein eS8 family. In terms of assembly, part of the 30S ribosomal subunit.

The polypeptide is Small ribosomal subunit protein eS8 (rps8e) (Archaeoglobus fulgidus (strain ATCC 49558 / DSM 4304 / JCM 9628 / NBRC 100126 / VC-16)).